The primary structure comprises 168 residues: Photosystem I assembly protein Ycf3 (168 aa).

TPR repeat units lie at residues 35–68 (AFTY…EIDP), 72–105 (SYIL…NPFL), and 120–153 (GEQA…TPGN).

Belongs to the Ycf3 family.

It is found in the plastid. The protein resides in the chloroplast thylakoid membrane. In terms of biological role, essential for the assembly of the photosystem I (PSI) complex. May act as a chaperone-like factor to guide the assembly of the PSI subunits. This chain is Photosystem I assembly protein Ycf3, found in Acorus calamus var. americanus (American sweet flag).